Reading from the N-terminus, the 95-residue chain is Protein RnfH (95 aa).

It belongs to the UPF0125 (RnfH) family.

The chain is Protein RnfH from Erwinia tasmaniensis (strain DSM 17950 / CFBP 7177 / CIP 109463 / NCPPB 4357 / Et1/99).